A 458-amino-acid chain; its full sequence is UDP-N-acetylmuramate--L-alanine ligase (458 aa).

118–124 (GTHGKTT) contributes to the ATP binding site.

This sequence belongs to the MurCDEF family.

It is found in the cytoplasm. It catalyses the reaction UDP-N-acetyl-alpha-D-muramate + L-alanine + ATP = UDP-N-acetyl-alpha-D-muramoyl-L-alanine + ADP + phosphate + H(+). The protein operates within cell wall biogenesis; peptidoglycan biosynthesis. In terms of biological role, cell wall formation. The chain is UDP-N-acetylmuramate--L-alanine ligase from Clostridium novyi (strain NT).